A 451-amino-acid chain; its full sequence is Proton-coupled amino acid transporter-like protein acs (451 aa).

Residues M1–T48 are Cytoplasmic-facing. Residues F49 to A69 form a helical membrane-spanning segment. The Extracellular segment spans residues H70–T80. N-linked (GlcNAc...) asparagine glycosylation occurs at N75. The helical transmembrane segment at L81–L101 threads the bilayer. Residues C102 to P136 lie on the Cytoplasmic side of the membrane. Residues F137–I157 traverse the membrane as a helical segment. The Extracellular segment spans residues A158 to E167. Residues Y168–I188 traverse the membrane as a helical segment. The Cytoplasmic portion of the chain corresponds to Y189–P199. Residues F200–F220 form a helical membrane-spanning segment. The Extracellular portion of the chain corresponds to E221–K237. The helical transmembrane segment at L238 to I258 threads the bilayer. Residues E259–C272 are Cytoplasmic-facing. The helical transmembrane segment at G273–G293 threads the bilayer. The Extracellular segment spans residues Y294–K320. N299 carries an N-linked (GlcNAc...) asparagine glycan. A helical transmembrane segment spans residues V321–I341. Residues L342–T357 are Cytoplasmic-facing. Residues F358–I378 form a helical membrane-spanning segment. The Extracellular portion of the chain corresponds to P379 to S382. The chain crosses the membrane as a helical span at residues V383–L403. Over L404–K420 the chain is Cytoplasmic. The chain crosses the membrane as a helical span at residues L421–V441. Residues S442–K451 are Extracellular-facing.

It belongs to the amino acid/polyamine transporter 2 family. As to expression, expressed in the proximal and distal regions of the midgut; expressed in enterocytes and progenitor cells. Expression increases in response to intestinal bacterial infection and spreads further into the midgut, eventually covering the entire midgut.

The protein localises to the cell membrane. Its subcellular location is the late endosome membrane. It is found in the lysosome membrane. The protein resides in the basal cell membrane. In terms of biological role, amino acid transporter which has pH-dependent electrogenic transport activity for alanine, glycine and proline. Plays a role in positive regulation of growth by directly or indirectly modulating the effects of the TOR signaling pathway. Required in enterocytes for the efficient recovery of gut epithelium following the cytoplasmic purge response to bacterial infection. Acts cell-autonomously to promote the retrograde transport of amino acids into the intestinal epithelium. Acts non-cell-autonomously through the insulin signaling pathway to stimulate Myc expression and the release of amino acids from nutrient stores into the hemolymph. This is Proton-coupled amino acid transporter-like protein acs from Drosophila melanogaster (Fruit fly).